We begin with the raw amino-acid sequence, 79 residues long: Acyl carrier protein (79 aa).

The Carrier domain occupies 4 to 79; that stretch reads EQILVDVQEA…DVVAYIETKL (76 aa). O-(pantetheine 4'-phosphoryl)serine is present on S39.

It belongs to the acyl carrier protein (ACP) family. Post-translationally, 4'-phosphopantetheine is transferred from CoA to a specific serine of apo-ACP by AcpS. This modification is essential for activity because fatty acids are bound in thioester linkage to the sulfhydryl of the prosthetic group.

The protein resides in the cytoplasm. It functions in the pathway lipid metabolism; fatty acid biosynthesis. Its function is as follows. Carrier of the growing fatty acid chain in fatty acid biosynthesis. This is Acyl carrier protein from Exiguobacterium sp. (strain ATCC BAA-1283 / AT1b).